The sequence spans 264 residues: Protein GrpE (264 aa).

Residues K36–S49 show a composition bias toward basic and acidic residues. The interval K36–S59 is disordered. Residues E50–S59 show a composition bias toward low complexity.

Belongs to the GrpE family. In terms of assembly, homodimer.

It is found in the cytoplasm. Participates actively in the response to hyperosmotic and heat shock by preventing the aggregation of stress-denatured proteins, in association with DnaK and GrpE. It is the nucleotide exchange factor for DnaK and may function as a thermosensor. Unfolded proteins bind initially to DnaJ; upon interaction with the DnaJ-bound protein, DnaK hydrolyzes its bound ATP, resulting in the formation of a stable complex. GrpE releases ADP from DnaK; ATP binding to DnaK triggers the release of the substrate protein, thus completing the reaction cycle. Several rounds of ATP-dependent interactions between DnaJ, DnaK and GrpE are required for fully efficient folding. This chain is Protein GrpE, found in Peanut witches'-broom phytoplasma.